The following is a 556-amino-acid chain: Urocanate hydratase (556 aa).

NAD(+)-binding positions include 52 to 53 (GG), Gln130, 176 to 178 (GMG), Glu196, Arg201, 242 to 243 (NA), 263 to 267 (QTSAH), 273 to 274 (YL), and Tyr322. Residue Cys410 is part of the active site. Gly492 serves as a coordination point for NAD(+).

Belongs to the urocanase family. Requires NAD(+) as cofactor.

The protein resides in the cytoplasm. It carries out the reaction 4-imidazolone-5-propanoate = trans-urocanate + H2O. It participates in amino-acid degradation; L-histidine degradation into L-glutamate; N-formimidoyl-L-glutamate from L-histidine: step 2/3. Its function is as follows. Catalyzes the conversion of urocanate to 4-imidazolone-5-propionate. This Bradyrhizobium diazoefficiens (strain JCM 10833 / BCRC 13528 / IAM 13628 / NBRC 14792 / USDA 110) protein is Urocanate hydratase.